Here is a 125-residue protein sequence, read N- to C-terminus: Small ribosomal subunit protein uS13 (125 aa).

Belongs to the universal ribosomal protein uS13 family. Part of the 30S ribosomal subunit. Forms a loose heterodimer with protein S19. Forms two bridges to the 50S subunit in the 70S ribosome.

Located at the top of the head of the 30S subunit, it contacts several helices of the 16S rRNA. In the 70S ribosome it contacts the 23S rRNA (bridge B1a) and protein L5 of the 50S subunit (bridge B1b), connecting the 2 subunits; these bridges are implicated in subunit movement. Contacts the tRNAs in the A and P-sites. The protein is Small ribosomal subunit protein uS13 of Rickettsia massiliae (strain Mtu5).